Consider the following 549-residue polypeptide: MSMFCFQCQETAKGTGCTIKGVCGKTADVANLQDLLLYVMKGIAINSLQARELGIVRQDVDKFVMEGLFATITNANFDNARFVALVREGLALRDSLKADIVKAGGVLPANLHDSATWTADSAEEFEQKAAQVGILATENEDVRSLRELLIYGLKGMAAYAEHAFALGYEDNSIFAFMMKGLAATTDDSLSADQLVALVLEAGKYGVDVMALLDKANTTSYGNPEITKVNIGVRNNPAILISGHDLRDLEDLLKQTEGTGVDVYTHGEMLPAHYYPAFKKYAHFVGNYGNAWWKQDKEFDSFNGAILLTTNCLVPPKDSYKDRLFTTSVVGYEGVKHIPAREAGKVKDFSAVIELAKTLPAPTEIETGEIVGGFAHNQVFAVADKVVEAVKSGAVKRFFVMAGCDGRMKSRDYYTEFAKALPQDTIILTAGCAKYKYNKLALGDIGGIPRVLDAGQCNDSYSLAVIALKLKEVFGLDDVNQLPISYNIAWYEQKAVIVLLALLYLGVKNIHLGPTLPGFLSPNVAKVLVENFGIAGITTVEDDVNLFMGA.

Positions 5, 8, 17, and 23 each coordinate [4Fe-4S] cluster. Positions 243, 267, 311, 403, 431, 456, 491, and 493 each coordinate hybrid [4Fe-2O-2S] cluster. The residue at position 403 (cysteine 403) is a Cysteine persulfide.

This sequence belongs to the HCP family. [4Fe-4S] cluster serves as cofactor. It depends on hybrid [4Fe-2O-2S] cluster as a cofactor.

The protein localises to the cytoplasm. It carries out the reaction A + NH4(+) + H2O = hydroxylamine + AH2 + H(+). Functionally, catalyzes the reduction of hydroxylamine to form NH(3) and H(2)O. The chain is Hydroxylamine reductase from Desulfitobacterium hafniense (strain DSM 10664 / DCB-2).